A 199-amino-acid polypeptide reads, in one-letter code: MIQISDKAQTYFRKLIEREGVPGMGVRLSAVDAGTPRADAKLEFAEPADLSGDEWAIDCDGFTLYVVAASVPWMDGAEIDYVTQSTGNQQLTIKAPKIKGEAPAESASMVERVRWVVENEINPQLASHGGRVAVQEVSAEGVVLLRFGGGCHGCGMADVTLKQGIEKTLMGRLPGVIAVRDATDHATGDAPYIPRDSAA.

Residues Cys151 and Cys154 each coordinate [4Fe-4S] cluster.

Belongs to the NfuA family. Homodimer. It depends on [4Fe-4S] cluster as a cofactor.

Functionally, involved in iron-sulfur cluster biogenesis. Binds a 4Fe-4S cluster, can transfer this cluster to apoproteins, and thereby intervenes in the maturation of Fe/S proteins. Could also act as a scaffold/chaperone for damaged Fe/S proteins. This Xanthomonas campestris pv. campestris (strain 8004) protein is Fe/S biogenesis protein NfuA.